A 466-amino-acid polypeptide reads, in one-letter code: Signal recognition particle 54 kDa protein (466 aa).

Residues 104 to 111 (GLQGSGKT), 184 to 188 (DTAGR), and 242 to 245 (TKLD) contribute to the GTP site. The tract at residues 446–466 (QQQGGGGMGGLGGGGGLGPFG) is disordered. Residues 448-466 (QGGGGMGGLGGGGGLGPFG) show a composition bias toward gly residues.

This sequence belongs to the GTP-binding SRP family. SRP54 subfamily. As to quaternary structure, part of the signal recognition particle protein translocation system, which is composed of SRP and FtsY. Archaeal SRP consists of a 7S RNA molecule of 300 nucleotides and two protein subunits: SRP54 and SRP19.

Its subcellular location is the cytoplasm. It carries out the reaction GTP + H2O = GDP + phosphate + H(+). Functionally, involved in targeting and insertion of nascent membrane proteins into the cytoplasmic membrane. Binds to the hydrophobic signal sequence of the ribosome-nascent chain (RNC) as it emerges from the ribosomes. The SRP-RNC complex is then targeted to the cytoplasmic membrane where it interacts with the SRP receptor FtsY. This chain is Signal recognition particle 54 kDa protein, found in Haloquadratum walsbyi (strain DSM 16790 / HBSQ001).